The following is a 504-amino-acid chain: 2-methylcitrate dehydratase 2 (504 aa).

This sequence belongs to the PrpD family. As to quaternary structure, monomer.

It catalyses the reaction (2S,3S)-2-methylcitrate = 2-methyl-cis-aconitate + H2O. It carries out the reaction citrate = D-threo-isocitrate. The protein operates within organic acid metabolism; propanoate degradation. It participates in carbohydrate metabolism; tricarboxylic acid cycle; isocitrate from oxaloacetate: step 1/2. Its function is as follows. Involved in the catabolism of short chain fatty acids (SCFA) via the 2-methylcitrate cycle I (propionate degradation route). Catalyzes the dehydration of 2-methylcitrate (2-MC) to yield the cis isomer 2-methyl-aconitate. Could also catalyze the dehydration of citrate and the hydration of cis-aconitate. In Corynebacterium glutamicum (strain ATCC 13032 / DSM 20300 / JCM 1318 / BCRC 11384 / CCUG 27702 / LMG 3730 / NBRC 12168 / NCIMB 10025 / NRRL B-2784 / 534), this protein is 2-methylcitrate dehydratase 2 (prpD2).